A 219-amino-acid chain; its full sequence is AA11 family lytic polysaccharide monooxygenase A (219 aa).

The N-terminal stretch at 1–18 (MMLSKVVMGLLTASLAAA) is a signal peptide. His19 contacts Cu(+). 3 disulfide bridges follow: Cys58–Cys154, Cys94–Cys116, and Cys185–Cys218. Residue Asn80 is glycosylated (N-linked (GlcNAc...) asparagine). Residue His89 coordinates Cu(+).

It belongs to the polysaccharide monooxygenase AA11 family. The cofactor is Cu(2+).

Lytic polysaccharide monooxygenase (LPMO) that depolymerizes chitin via the oxidation of scissile beta-(1-4)-glycosidic bonds, yielding C1 or C4 oxidation products. Catalysis by LPMOs requires the reduction of the active-site copper from Cu(II) to Cu(I) by a reducing agent and H(2)O(2) or O(2) as a cosubstrate. Has considerable affinity for alpha-chitin and, more so, beta-chitin. Active toward both alpha-chitin and beta-chitin allomorphs and enhances chitin degradation by an endoacting chitinase, in particular for alpha-chitin, and so plays a role in fungal chitin turnover. The catalytic activity increases when supplying reactions with hydrogen peroxide, confirming that it has peroxygenase activity. Does not show activity on phosphoric acid-swollen cellulose (PASC), Avicel, tamarind xyloglucan, birchwood xylan, beechwood xylan, acetyl glucuronoxylan from aspen, ivory nut mannan, acetylated konjac glucomannan, potato starch, heparin, hyaluronic acid, and chitosan. In Aspergillus fumigatus (strain CBS 144.89 / FGSC A1163 / CEA10) (Neosartorya fumigata), this protein is AA11 family lytic polysaccharide monooxygenase A.